The chain runs to 372 residues: Pre-small/secreted glycoprotein (372 aa).

An N-terminal signal peptide occupies residues 1-32; the sequence is MEGLSLLQLPRDKFRKSSFFVWVIILFQKAFS. The N-linked (GlcNAc...) asparagine; by host glycan is linked to Asn-40. 2 disulfides stabilise this stretch: Cys-108-Cys-135 and Cys-121-Cys-147. 5 N-linked (GlcNAc...) asparagine; by host glycosylation sites follow: Asn-204, Asn-208, Asn-238, Asn-257, and Asn-268. The segment at 320–340 is disordered; it reads MRHRRELQREESPTGPPGSIR.

This sequence belongs to the filoviruses glycoprotein family. As to quaternary structure, homodimer; disulfide-linked. The homodimers are linked by two disulfide bonds in a parallel orientation. Monomer. In terms of processing, this precursor is processed into mature sGP and delta-peptide by host furin or furin-like proteases. The cleavage site corresponds to the furin optimal cleavage sequence [KR]-X-[KR]-R. N-glycosylated. Post-translationally, O-glycosylated.

It localises to the secreted. Its function is as follows. Seems to possess an anti-inflammatory activity as it can reverse the barrier-decreasing effects of TNF alpha. Might therefore contribute to the lack of inflammatory reaction seen during infection in spite the of extensive necrosis and massive virus production. Does not seem to be involved in activation of primary macrophages. Does not seem to interact specifically with neutrophils. Functionally, viroporin that permeabilizes mammalian cell plasma membranes. It acts by altering permeation of ionic compounds and small molecules. This activity may lead to viral enterotoxic activity. The polypeptide is Pre-small/secreted glycoprotein (GP) (Sudan ebolavirus (strain Boniface-76) (SEBOV)).